The chain runs to 260 residues: MSDNKSVLVLKVGGALLQCEMGMSRLMTAAAQMIATGQKVLLVHGGGCLVDEQLTANGKETIKLDGLRVTPEDQIPIVVGALAGTSNKILQAAAAKAGLVSVGMSLGDGNTVHAKIKDERLGLVGEVSPNDATYLNFILDQGWLPICSSIAVSADGLMLNVNADQAATALAKLVNGNLVLLSDVSGVLDGKGQLIASLNKTEIETLVKQGVIEKGMKVKVEAALEVAQWMGKPVQVASWRDAEQLKKLVLGQSVGTQIQP.

Residues 46-47 (GG), Arg-68, and Asn-160 each bind substrate.

It belongs to the acetylglutamate kinase family. ArgB subfamily.

The protein resides in the cytoplasm. It catalyses the reaction N-acetyl-L-glutamate + ATP = N-acetyl-L-glutamyl 5-phosphate + ADP. It functions in the pathway amino-acid biosynthesis; L-arginine biosynthesis; N(2)-acetyl-L-ornithine from L-glutamate: step 2/4. Its function is as follows. Catalyzes the ATP-dependent phosphorylation of N-acetyl-L-glutamate. The polypeptide is Acetylglutamate kinase (Shewanella denitrificans (strain OS217 / ATCC BAA-1090 / DSM 15013)).